The following is a 235-amino-acid chain: Phosphoribosylaminoimidazole-succinocarboxamide synthase (235 aa).

It belongs to the SAICAR synthetase family.

It carries out the reaction 5-amino-1-(5-phospho-D-ribosyl)imidazole-4-carboxylate + L-aspartate + ATP = (2S)-2-[5-amino-1-(5-phospho-beta-D-ribosyl)imidazole-4-carboxamido]succinate + ADP + phosphate + 2 H(+). It functions in the pathway purine metabolism; IMP biosynthesis via de novo pathway; 5-amino-1-(5-phospho-D-ribosyl)imidazole-4-carboxamide from 5-amino-1-(5-phospho-D-ribosyl)imidazole-4-carboxylate: step 1/2. This Nautilia profundicola (strain ATCC BAA-1463 / DSM 18972 / AmH) protein is Phosphoribosylaminoimidazole-succinocarboxamide synthase.